Here is a 157-residue protein sequence, read N- to C-terminus: MKTPNTKMNVESFNLDHTKVKAPYVRIADRKKGINGDLIVKYDVRFKQPNQEHMDMPSLHSLEHLVAEIIRNHANYVVDWSPMGCQTGFYLTVLNHDNYTEILEVLEKTMQDVLKATEVPASNEKQCGWAANHTLEGAKNLAHAFLSKRDEWSEIGI.

Residues H60, H64, and C127 each contribute to the Fe cation site.

This sequence belongs to the LuxS family. As to quaternary structure, homodimer. The cofactor is Fe cation.

The enzyme catalyses S-(5-deoxy-D-ribos-5-yl)-L-homocysteine = (S)-4,5-dihydroxypentane-2,3-dione + L-homocysteine. Functionally, involved in the synthesis of autoinducer 2 (AI-2) which is secreted by bacteria and is used to communicate both the cell density and the metabolic potential of the environment. The regulation of gene expression in response to changes in cell density is called quorum sensing. Catalyzes the transformation of S-ribosylhomocysteine (RHC) to homocysteine (HC) and 4,5-dihydroxy-2,3-pentadione (DPD). In Helicobacter acinonychis (strain Sheeba), this protein is S-ribosylhomocysteine lyase.